The chain runs to 291 residues: Diaminopimelate epimerase (291 aa).

The substrate site is built by Asn-13, Gln-46, and Asn-66. The active-site Proton donor is the Cys-75. Residues 76–77 (GN), Asn-156, Asn-189, and 207–208 (ER) contribute to the substrate site. Cys-216 serves as the catalytic Proton acceptor. 217–218 (GS) serves as a coordination point for substrate.

The protein belongs to the diaminopimelate epimerase family. Homodimer.

The protein localises to the cytoplasm. The catalysed reaction is (2S,6S)-2,6-diaminopimelate = meso-2,6-diaminopimelate. It functions in the pathway amino-acid biosynthesis; L-lysine biosynthesis via DAP pathway; DL-2,6-diaminopimelate from LL-2,6-diaminopimelate: step 1/1. Its function is as follows. Catalyzes the stereoinversion of LL-2,6-diaminopimelate (L,L-DAP) to meso-diaminopimelate (meso-DAP), a precursor of L-lysine and an essential component of the bacterial peptidoglycan. The sequence is that of Diaminopimelate epimerase from Rhodospirillum centenum (strain ATCC 51521 / SW).